The sequence spans 204 residues: Large ribosomal subunit protein eL15 (204 aa).

It belongs to the eukaryotic ribosomal protein eL15 family. As to quaternary structure, component of the large ribosomal subunit.

The protein resides in the cytoplasm. Its function is as follows. Component of the large ribosomal subunit. The ribosome is a large ribonucleoprotein complex responsible for the synthesis of proteins in the cell. This Carassius auratus (Goldfish) protein is Large ribosomal subunit protein eL15 (rpl15).